The chain runs to 206 residues: ATP-dependent dethiobiotin synthetase BioD (206 aa).

12–17 (GVGKTI) contributes to the ATP binding site. A Mg(2+)-binding site is contributed by threonine 16. The active site involves lysine 32. Mg(2+)-binding residues include histidine 46 and glutamate 98. 98–101 (EGAG) is an ATP binding site.

It belongs to the dethiobiotin synthetase family. In terms of assembly, homodimer. Mg(2+) is required as a cofactor.

Its subcellular location is the cytoplasm. The enzyme catalyses (7R,8S)-7,8-diammoniononanoate + CO2 + ATP = (4R,5S)-dethiobiotin + ADP + phosphate + 3 H(+). The protein operates within cofactor biosynthesis; biotin biosynthesis; biotin from 7,8-diaminononanoate: step 1/2. Catalyzes a mechanistically unusual reaction, the ATP-dependent insertion of CO2 between the N7 and N8 nitrogen atoms of 7,8-diaminopelargonic acid (DAPA, also called 7,8-diammoniononanoate) to form a ureido ring. In Novosphingobium aromaticivorans (strain ATCC 700278 / DSM 12444 / CCUG 56034 / CIP 105152 / NBRC 16084 / F199), this protein is ATP-dependent dethiobiotin synthetase BioD.